The primary structure comprises 222 residues: Iodotyrosine deiodinase (222 aa).

FMN-binding positions include 34-38 and 61-62; these read RRTVR and PS. The 3-iodo-L-tyrosine site is built by Glu-91, Tyr-95, and Lys-116. FMN is bound by residues 171 to 173 and Arg-212; that span reads THT.

This sequence belongs to the nitroreductase family. In terms of assembly, homodimer. The cofactor is FMN.

It carries out the reaction 2 iodide + L-tyrosine + 2 NADP(+) = 3,5-diiodo-L-tyrosine + 2 NADPH + H(+). The enzyme catalyses iodide + L-tyrosine + NADP(+) = 3-iodo-L-tyrosine + NADPH. The catalysed reaction is 3-iodo-L-tyrosine + iodide + NADP(+) = 3,5-diiodo-L-tyrosine + NADPH + H(+). It catalyses the reaction L-tyrosine + chloride + NADP(+) = 3-chloro-L-tyrosine + NADPH. It carries out the reaction bromide + L-tyrosine + NADP(+) = 3-bromo-L-tyrosine + NADPH. Its function is as follows. Catalyzes the dehalogenation of halotyrosines such as 3-iodo-L-tyrosine and 3,5-diiodo-L-tyrosine. Likely to also catalyze the dehalogenation of other halotyrosines such as 3-bromo-L-tyrosine, 3-chloro-L-tyrosine and 3-iodo-L-tyrosine. Activity towards 3-iodo-L-tyrosine is much stronger than activity towards 3,5-diiodo-L-tyrosine and 2-iodophenol. This Haliscomenobacter hydrossis (strain ATCC 27775 / DSM 1100 / LMG 10767 / O) protein is Iodotyrosine deiodinase.